Reading from the N-terminus, the 185-residue chain is MHQPLTADLNPADEVVAVYDRTGNPIGRAPRSVVYSGGLWHASAGVLVRTGDGSRIYVHRRTDTKAVFGGYHDCLAGGVVDPGETPQETAIREVGEELGIFGTADQPLQLTEIARISWDGEWNNSPLRCHLFAFELRYDGPMAHQPSEIAEGWWWTPKELGAHLQDPSWPFVPDSRALLADYCWS.

In terms of domain architecture, Nudix hydrolase spans 39 to 177 (LWHASAGVLV…SWPFVPDSRA (139 aa)). The short motif at 77 to 99 (GGVVDPGETPQETAIREVGEELG) is the Nudix box element. Glu93 and Glu97 together coordinate Mg(2+).

It belongs to the Nudix hydrolase family. Mg(2+) serves as cofactor.

This is an uncharacterized protein from Rhodococcus erythropolis (Arthrobacter picolinophilus).